Here is a 427-residue protein sequence, read N- to C-terminus: Trigger factor (427 aa).

Positions 163–248 (GDTVVIDFVG…IHEVKTKEVP (86 aa)) constitute a PPIase FKBP-type domain.

Belongs to the FKBP-type PPIase family. Tig subfamily.

It localises to the cytoplasm. The catalysed reaction is [protein]-peptidylproline (omega=180) = [protein]-peptidylproline (omega=0). Its function is as follows. Involved in protein export. Acts as a chaperone by maintaining the newly synthesized protein in an open conformation. Functions as a peptidyl-prolyl cis-trans isomerase. This Streptococcus agalactiae serotype V (strain ATCC BAA-611 / 2603 V/R) protein is Trigger factor.